A 215-amino-acid polypeptide reads, in one-letter code: Probable GTP-binding protein EngB (215 aa).

The EngB-type G domain maps to 26–200 (EGIEVAFAGR…RAKLDEWFAP (175 aa)). GTP contacts are provided by residues 34-41 (GRSNAGKS), 61-65 (GRTQL), 79-82 (DLPG), 146-149 (TKAD), and 179-181 (FSS). Ser41 and Thr63 together coordinate Mg(2+).

It belongs to the TRAFAC class TrmE-Era-EngA-EngB-Septin-like GTPase superfamily. EngB GTPase family. It depends on Mg(2+) as a cofactor.

Functionally, necessary for normal cell division and for the maintenance of normal septation. The protein is Probable GTP-binding protein EngB of Aliivibrio fischeri (strain MJ11) (Vibrio fischeri).